Here is a 41-residue protein sequence, read N- to C-terminus: Alpha-conotoxin TxIB (41 aa).

A propeptide spanning residues 1-20 (FDGRNTSANNKATDLMALPV) is cleaved from the precursor. Disulfide bonds link Cys-23–Cys-29 and Cys-24–Cys-37. Positions 25–27 (SDP) are ser-Xaa-Pro motif, crucial for potent interaction with nAChR. At Cys-37 the chain carries Cysteine amide; in Alpha-conotoxin TxIB. Positions 39-41 (GRR) are excised as a propeptide.

This sequence belongs to the conotoxin A superfamily. Expressed by the venom duct.

It is found in the secreted. Alpha-conotoxins act on postsynaptic membranes, they bind to the nicotinic acetylcholine receptors (nAChR) and thus inhibit them. This conotoxin is a subtype-specific blocker of alpha-6/alpha-3-beta-2-beta-3 (CHRNA6/CHRNA3-CHRNB2-CHRNB3) nAChRs nicotinic acetylcholine receptors (nAChRs) (IC(50)=28.4 nM). The sequence is that of Alpha-conotoxin TxIB from Conus textile (Cloth-of-gold cone).